Here is a 413-residue protein sequence, read N- to C-terminus: Serine hydroxymethyltransferase (413 aa).

(6S)-5,6,7,8-tetrahydrofolate is bound by residues Leu-117 and 121–123 (GHL). An N6-(pyridoxal phosphate)lysine modification is found at Lys-226. Residue 349–351 (SPF) participates in (6S)-5,6,7,8-tetrahydrofolate binding.

This sequence belongs to the SHMT family. Homodimer. The cofactor is pyridoxal 5'-phosphate.

The protein resides in the cytoplasm. It carries out the reaction (6R)-5,10-methylene-5,6,7,8-tetrahydrofolate + glycine + H2O = (6S)-5,6,7,8-tetrahydrofolate + L-serine. It functions in the pathway one-carbon metabolism; tetrahydrofolate interconversion. Its pathway is amino-acid biosynthesis; glycine biosynthesis; glycine from L-serine: step 1/1. In terms of biological role, catalyzes the reversible interconversion of serine and glycine with tetrahydrofolate (THF) serving as the one-carbon carrier. This reaction serves as the major source of one-carbon groups required for the biosynthesis of purines, thymidylate, methionine, and other important biomolecules. Also exhibits THF-independent aldolase activity toward beta-hydroxyamino acids, producing glycine and aldehydes, via a retro-aldol mechanism. This Listeria monocytogenes serotype 4b (strain F2365) protein is Serine hydroxymethyltransferase.